A 21-amino-acid polypeptide reads, in one-letter code: MAAEINMVILAWDLCLLELPY.

This is an uncharacterized protein from Dictyostelium discoideum (Social amoeba).